Consider the following 318-residue polypeptide: Aspartate carbamoyltransferase catalytic subunit (318 aa).

Carbamoyl phosphate is bound by residues arginine 62 and threonine 63. Lysine 90 serves as a coordination point for L-aspartate. Residues arginine 112, histidine 140, and glutamine 143 each contribute to the carbamoyl phosphate site. 2 residues coordinate L-aspartate: arginine 173 and arginine 227. 2 residues coordinate carbamoyl phosphate: glycine 268 and proline 269.

This sequence belongs to the aspartate/ornithine carbamoyltransferase superfamily. ATCase family. In terms of assembly, heterododecamer (2C3:3R2) of six catalytic PyrB chains organized as two trimers (C3), and six regulatory PyrI chains organized as three dimers (R2).

The enzyme catalyses carbamoyl phosphate + L-aspartate = N-carbamoyl-L-aspartate + phosphate + H(+). It participates in pyrimidine metabolism; UMP biosynthesis via de novo pathway; (S)-dihydroorotate from bicarbonate: step 2/3. Its function is as follows. Catalyzes the condensation of carbamoyl phosphate and aspartate to form carbamoyl aspartate and inorganic phosphate, the committed step in the de novo pyrimidine nucleotide biosynthesis pathway. The polypeptide is Aspartate carbamoyltransferase catalytic subunit (Desulfotalea psychrophila (strain LSv54 / DSM 12343)).